The primary structure comprises 159 residues: Transcription antitermination protein NusB (159 aa).

Belongs to the NusB family.

Involved in transcription antitermination. Required for transcription of ribosomal RNA (rRNA) genes. Binds specifically to the boxA antiterminator sequence of the ribosomal RNA (rrn) operons. This chain is Transcription antitermination protein NusB, found in Stenotrophomonas maltophilia (strain K279a).